A 178-amino-acid chain; its full sequence is ATP synthase subunit delta (178 aa).

The protein belongs to the ATPase delta chain family. In terms of assembly, F-type ATPases have 2 components, F(1) - the catalytic core - and F(0) - the membrane proton channel. F(1) has five subunits: alpha(3), beta(3), gamma(1), delta(1), epsilon(1). F(0) has three main subunits: a(1), b(2) and c(10-14). The alpha and beta chains form an alternating ring which encloses part of the gamma chain. F(1) is attached to F(0) by a central stalk formed by the gamma and epsilon chains, while a peripheral stalk is formed by the delta and b chains.

It localises to the cell membrane. Functionally, f(1)F(0) ATP synthase produces ATP from ADP in the presence of a proton or sodium gradient. F-type ATPases consist of two structural domains, F(1) containing the extramembraneous catalytic core and F(0) containing the membrane proton channel, linked together by a central stalk and a peripheral stalk. During catalysis, ATP synthesis in the catalytic domain of F(1) is coupled via a rotary mechanism of the central stalk subunits to proton translocation. Its function is as follows. This protein is part of the stalk that links CF(0) to CF(1). It either transmits conformational changes from CF(0) to CF(1) or is implicated in proton conduction. This chain is ATP synthase subunit delta, found in Mycoplasma pneumoniae (strain ATCC 29342 / M129 / Subtype 1) (Mycoplasmoides pneumoniae).